Consider the following 170-residue polypeptide: Acireductone dioxygenase (170 aa).

Fe(2+) contacts are provided by His99, His101, Glu105, and His144. The Ni(2+) site is built by His99, His101, Glu105, and His144.

Belongs to the acireductone dioxygenase (ARD) family. Monomer. It depends on Fe(2+) as a cofactor. Requires Ni(2+) as cofactor.

The enzyme catalyses 1,2-dihydroxy-5-(methylsulfanyl)pent-1-en-3-one + O2 = 3-(methylsulfanyl)propanoate + CO + formate + 2 H(+). It carries out the reaction 1,2-dihydroxy-5-(methylsulfanyl)pent-1-en-3-one + O2 = 4-methylsulfanyl-2-oxobutanoate + formate + 2 H(+). It participates in amino-acid biosynthesis; L-methionine biosynthesis via salvage pathway; L-methionine from S-methyl-5-thio-alpha-D-ribose 1-phosphate: step 5/6. Functionally, catalyzes 2 different reactions between oxygen and the acireductone 1,2-dihydroxy-3-keto-5-methylthiopentene (DHK-MTPene) depending upon the metal bound in the active site. Fe-containing acireductone dioxygenase (Fe-ARD) produces formate and 2-keto-4-methylthiobutyrate (KMTB), the alpha-ketoacid precursor of methionine in the methionine recycle pathway. Ni-containing acireductone dioxygenase (Ni-ARD) produces methylthiopropionate, carbon monoxide and formate, and does not lie on the methionine recycle pathway. In Bacillus cytotoxicus (strain DSM 22905 / CIP 110041 / 391-98 / NVH 391-98), this protein is Acireductone dioxygenase.